The chain runs to 596 residues: Cell adhesion molecule CEACAM20 (596 aa).

A signal peptide spans 1–30 (MGPADSWGHHWMGILLSASLCTVWSPPAAA). The Extracellular portion of the chain corresponds to 31–450 (QLTLNANPLD…SSLSSGAIAG (420 aa)). 4 consecutive Ig-like C2-type domains span residues 58–154 (PQIH…PIFL), 160–246 (PDPV…GTLK), 256–341 (PQVV…LELT), and 346–432 (PDQV…TSVL). A disulfide bond links C90 and C138. N-linked (GlcNAc...) asparagine glycans are attached at residues N96 and N105. An intrachain disulfide couples C276 to C324. N-linked (GlcNAc...) asparagine glycans are attached at residues N280, N306, N317, N368, and N415. The cysteines at positions 375 and 416 are disulfide-linked. The chain crosses the membrane as a helical span at residues 451-471 (IVIGILAVIAVASELGYFLCI). At 472–585 (RNARRPSRKT…SIYEELVNPE (114 aa)) the chain is on the cytoplasmic side. 2 disordered regions span residues 477-510 (PSRK…LSPE) and 527-563 (QPPD…LMPP). Residues 501–510 (EPSSESLSPE) show a composition bias toward low complexity. A compositionally biased stretch (pro residues) spans 553 to 562 (WKPPPKPLMP). Phosphotyrosine occurs at positions 578 and 589.

Belongs to the immunoglobulin superfamily. CEA family. In terms of assembly, interacts (via extracellular domain) with PTPRH (via extracellular domain); the interaction dephosphorylates CEACAM20. Interacts (phosphorylated form) with SYK (via SH2 domains); the interaction further enhances CEACAM20 phosphorylation. Phosphorylated on tyrosine residues by SYK, SRC and FYN in vitro.

It is found in the cell projection. Its subcellular location is the microvillus membrane. It localises to the apical cell membrane. Together with the tyrosine-protein kinase SYK, enhances production of the cytokine CXCL8/IL-8 via the NFKB pathway and may thus have a role in the intestinal immune response. The polypeptide is Cell adhesion molecule CEACAM20 (Homo sapiens (Human)).